Here is a 240-residue protein sequence, read N- to C-terminus: Endonuclease NBR9 (240 aa).

Positions 1–24 (MKGTGGVVVGTQNPVRDYNHSTDE) are disordered. One can recognise a Smr domain in the interval 97–173 (IDLHGLYVKE…NSGVLVLELQ (77 aa)). The segment at 181–219 (GPAVNAPTNQYNAQPHPQYNNNGGQPQGQAQNYNNSGND) is disordered. A compositionally biased stretch (low complexity) spans 194-215 (QPHPQYNNNGGQPQGQAQNYNN).

Its subcellular location is the cytoplasm. Endonuclease involved in nonstop mRNA decay via the formation of mRNA cleavage fragments in the vicinity of stalled ribosomes. The protein is Endonuclease NBR9 of Saccharomyces cerevisiae (strain ATCC 204508 / S288c) (Baker's yeast).